We begin with the raw amino-acid sequence, 176 residues long: MSAGGASVPPPPNPAVSFPPPRVTLPAGPDILRTYSGAFVCLEILFGGLVWILVASSNVPLPLLQGWVMFVSVTAFFFSLLFLGMFLSGMVAQIDANWNFLDFAYHFTVFVFYFGAFLLEAAATSLHDLHCNTTITGQPLLSDNQYNINVAASIFAFMTTACYGCSLGLALRRWRP.

At 1-34 the chain is on the cytoplasmic side; that stretch reads MSAGGASVPPPPNPAVSFPPPRVTLPAGPDILRT. An MARVEL domain is found at 31-175; that stretch reads ILRTYSGAFV…SLGLALRRWR (145 aa). A helical transmembrane segment spans residues 35-55; sequence YSGAFVCLEILFGGLVWILVA. At 56–66 the chain is on the lumenal side; that stretch reads SSNVPLPLLQG. Residues 67 to 87 form a helical membrane-spanning segment; sequence WVMFVSVTAFFFSLLFLGMFL. Residues 88–102 lie on the Cytoplasmic side of the membrane; sequence SGMVAQIDANWNFLD. Residues 103–123 traverse the membrane as a helical segment; the sequence is FAYHFTVFVFYFGAFLLEAAA. Residues 124–149 lie on the Lumenal side of the membrane; the sequence is TSLHDLHCNTTITGQPLLSDNQYNIN. A glycan (N-linked (GlcNAc...) asparagine) is linked at asparagine 132. Residues 150 to 170 form a helical membrane-spanning segment; that stretch reads VAASIFAFMTTACYGCSLGLA. Over 171-176 the chain is Cytoplasmic; it reads LRRWRP.

Belongs to the MAL family. In terms of assembly, interacts with TPD52L2. In terms of tissue distribution, predominantly expressed in kidney, lung, and liver. Also found in thyroid gland, stomach and, at lower levels in testis and small intestine.

The protein localises to the cell membrane. Its subcellular location is the apical cell membrane. It is found in the endomembrane system. It localises to the cytoplasm. The protein resides in the perinuclear region. Its function is as follows. Member of the machinery of polarized transport. Required for the indirect transcytotic route at the step of the egress of the transcytosing cargo from perinuclear endosomes in order for it to travel to the apical surface via a raft-dependent pathway. The protein is Protein MAL2 (MAL2) of Homo sapiens (Human).